The primary structure comprises 120 residues: Large ribosomal subunit protein uL24 (120 aa).

A disordered region spans residues 1-26 (MVRVISSQPRKQRKARYNAPHHMRGS). Residues 10–24 (RKQRKARYNAPHHMR) are compositionally biased toward basic residues.

It belongs to the universal ribosomal protein uL24 family. In terms of assembly, part of the 50S ribosomal subunit.

In terms of biological role, one of two assembly initiator proteins, it binds directly to the 5'-end of the 23S rRNA, where it nucleates assembly of the 50S subunit. Functionally, located at the polypeptide exit tunnel on the outside of the subunit. This is Large ribosomal subunit protein uL24 from Methanospirillum hungatei JF-1 (strain ATCC 27890 / DSM 864 / NBRC 100397 / JF-1).